Consider the following 349-residue polypeptide: Aspartate-semialdehyde dehydrogenase (349 aa).

NADP(+) contacts are provided by residues 12 to 15 and 39 to 40; these read TGSV and NS. Arg113 serves as a coordination point for phosphate. The Acyl-thioester intermediate role is filled by Cys148. A substrate-binding site is contributed by Gln175. NADP(+) is bound at residue 178-179; it reads SG. Glu201 lines the substrate pocket. A phosphate-binding site is contributed by Lys204. Arg234 serves as a coordination point for substrate. His241 functions as the Proton acceptor in the catalytic mechanism. NADP(+) is bound at residue 326–327; that stretch reads NT.

This sequence belongs to the aspartate-semialdehyde dehydrogenase family. As to quaternary structure, homodimer.

The enzyme catalyses L-aspartate 4-semialdehyde + phosphate + NADP(+) = 4-phospho-L-aspartate + NADPH + H(+). The protein operates within amino-acid biosynthesis; L-lysine biosynthesis via DAP pathway; (S)-tetrahydrodipicolinate from L-aspartate: step 2/4. It participates in amino-acid biosynthesis; L-methionine biosynthesis via de novo pathway; L-homoserine from L-aspartate: step 2/3. Its pathway is amino-acid biosynthesis; L-threonine biosynthesis; L-threonine from L-aspartate: step 2/5. Functionally, catalyzes the NADPH-dependent formation of L-aspartate-semialdehyde (L-ASA) by the reductive dephosphorylation of L-aspartyl-4-phosphate. The protein is Aspartate-semialdehyde dehydrogenase of Leptospira interrogans serogroup Icterohaemorrhagiae serovar copenhageni (strain Fiocruz L1-130).